Consider the following 205-residue polypeptide: Ribosomal RNA small subunit methyltransferase G (205 aa).

S-adenosyl-L-methionine contacts are provided by residues Gly-73, Leu-78, 124–125, and Arg-139; that span reads VE.

The protein belongs to the methyltransferase superfamily. RNA methyltransferase RsmG family.

The protein localises to the cytoplasm. The enzyme catalyses guanosine(527) in 16S rRNA + S-adenosyl-L-methionine = N(7)-methylguanosine(527) in 16S rRNA + S-adenosyl-L-homocysteine. In terms of biological role, specifically methylates the N7 position of guanine in position 527 of 16S rRNA. The chain is Ribosomal RNA small subunit methyltransferase G from Methylobacillus flagellatus (strain ATCC 51484 / DSM 6875 / VKM B-1610 / KT).